A 317-amino-acid chain; its full sequence is Zinc metalloproteinase/disintegrin (317 aa).

Residues 1–26 (EAPKMCGVTQNWESYEPIKKASQSNL) constitute a propeptide that is removed on maturation. The Peptidase M12B domain occupies 32 to 228 (RYIELVIVAD…QKPQCILNKP (197 aa)). Residues E35 and D119 each coordinate Ca(2+). 3 disulfide bridges follow: C143–C223, C183–C207, and C185–C190. H168 is a Zn(2+) binding site. Residue E169 is part of the active site. Positions 172 and 178 each coordinate Zn(2+). Residues C223 and N226 each coordinate Ca(2+). Residues 229 to 244 (LRTDTVSTPVSGNELL) constitute a propeptide that is removed on maturation. In terms of domain architecture, Disintegrin spans 236–317 (TPVSGNELLE…AGCPRNPFHA (82 aa)). 6 disulfide bridges follow: C250-C259, C252-C260, C265-C279, C273-C303, C278-C282, and C291-C310. Residues 295–297 (RGD) carry the Cell attachment site motif.

This sequence belongs to the venom metalloproteinase (M12B) family. P-II subfamily. P-IIa sub-subfamily. As to quaternary structure, monomer. Zn(2+) serves as cofactor. In terms of tissue distribution, expressed by the venom gland.

Its subcellular location is the secreted. Its function is as follows. metalloproteinase that impairs hemostasis in the envenomed animal. In terms of biological role, inhibits GPIIb/GPIIIa (ITGA2B/ITGB3) binding to immobilized fibrinogen with an IC(50) of 2.2 nM and ADP-induced platelet aggregation with an IC(50) of 131 nM, respectively. Inhibits angiogenesis. By binding to vitronectin receptor (alpha-V/beta-3 (ITGAV/ITGB3)), also induces apoptosis of endothelial cells by blocking their attachment to extracellular matrix proteins. Functionally, inhibits platelet aggregation induced by ADP (IC(50) is 30 nM), collagen (IC(50) is 500 nM), thrombin and epinephrin (IC(50) is 160 nM). In Gloydius brevicauda (Korean slamosa snake), this protein is Zinc metalloproteinase/disintegrin.